A 126-amino-acid chain; its full sequence is Probable 4-amino-4-deoxy-L-arabinose-phosphoundecaprenol flippase subunit ArnF (126 aa).

The helical transmembrane segment at 1–21 threads the bilayer; it reads MGFLWALFSVGLVSAAQLLLR. The Periplasmic portion of the chain corresponds to 22 to 47; the sequence is SAMVALPPLTDIVAFLQHLLHFQPGT. A helical membrane pass occupies residues 48–68; it reads VGLFFGLLGYLLSMVCWYFAL. Topologically, residues 69 to 76 are cytoplasmic; sequence HRLPLSKA. A helical transmembrane segment spans residues 77 to 97; it reads YALLSLSYILVWAAAIWLPGW. Residues 98–100 are Periplasmic-facing; the sequence is HEP. The chain crosses the membrane as a helical span at residues 101-121; the sequence is FYWQSLLGVTIIVAGVLTIFW. Over 122-126 the chain is Cytoplasmic; the sequence is PVKRR.

Belongs to the ArnF family. Heterodimer of ArnE and ArnF.

Its subcellular location is the cell inner membrane. Its pathway is bacterial outer membrane biogenesis; lipopolysaccharide biosynthesis. Translocates 4-amino-4-deoxy-L-arabinose-phosphoundecaprenol (alpha-L-Ara4N-phosphoundecaprenol) from the cytoplasmic to the periplasmic side of the inner membrane. The protein is Probable 4-amino-4-deoxy-L-arabinose-phosphoundecaprenol flippase subunit ArnF of Klebsiella pneumoniae (strain 342).